The chain runs to 172 residues: Type IV secretion system putative outer membrane lipoprotein BAB2_0057 (172 aa).

Residues 1 to 15 form the signal peptide; sequence MRTLVMVACAVSLAA. A lipid anchor (N-palmitoyl cysteine) is attached at C16. C16 carries S-diacylglycerol cysteine lipidation. The OmpA-like domain occupies 58–172; that stretch reads WPARPPKQTV…RRVDIEILRK (115 aa).

Its subcellular location is the cell outer membrane. The virB operon is essential for intracellular survival and is not involved in the invasion process. Constitutes a major determinant of virulence in mice. This protein is essential for pathogenesis in mice but is not required for intracellular survival. In Brucella abortus (strain 2308), this protein is Type IV secretion system putative outer membrane lipoprotein BAB2_0057.